An 821-amino-acid polypeptide reads, in one-letter code: Serine/threonine-protein kinase RAD53 (821 aa).

Ser24 carries the phosphoserine modification. The region spanning 66 to 116 is the FHA 1 domain; sequence WTFGRNPACDYHLGNISRLSNKHFQILLGEDGNLLLNDISTNGTWLNGQKV. Ser175 bears the Phosphoserine mark. One can recognise a Protein kinase domain in the interval 198–466; sequence SIIDEVVGQG…AAKALNHPWI (269 aa). Residues 204–212 and Lys227 contribute to the ATP site; that span reads VGQGAFATV. Catalysis depends on Asp319, which acts as the Proton acceptor. A phosphoserine mark is found at Ser547 and Ser560. The FHA 2 domain occupies 601–664; that stretch reads FFIGRSEDCN…NVSYLNNNRM (64 aa). The disordered stretch occupies residues 735–770; that stretch reads AAQRANQPSASSSSMSAKKPPVSDTNNNGNNSVLND. Residues 742-770 show a composition bias toward low complexity; sequence PSASSSSMSAKKPPVSDTNNNGNNSVLND. Residues Ser774 and Ser793 each carry the phosphoserine modification. Residues 791-821 form a disordered region; sequence SLSQSQIDPSKKVKRAKLDQTSKGPENLQFS. A compositionally biased stretch (polar residues) spans 809 to 821; that stretch reads DQTSKGPENLQFS.

Belongs to the protein kinase superfamily. CAMK Ser/Thr protein kinase family. CHEK2 subfamily. In terms of assembly, interacts (via domain FHA 1) with PTC2 (when phosphorylated); the interaction is direct and serves to regulate DNA damage checkpoint signaling. Interacts with PIN4. Autophosphorylated. Phosphorylated in response to DNA double-strand breaks; dephosphorylation is mediated by PTC2 and PTC3.

It is found in the nucleus. It carries out the reaction L-seryl-[protein] + ATP = O-phospho-L-seryl-[protein] + ADP + H(+). The catalysed reaction is L-threonyl-[protein] + ATP = O-phospho-L-threonyl-[protein] + ADP + H(+). It catalyses the reaction L-tyrosyl-[protein] + ATP = O-phospho-L-tyrosyl-[protein] + ADP + H(+). Inactivated by dephosphorylation via recruitment of PTC2. In terms of biological role, controls S-phase checkpoint as well as G1 and G2 DNA damage checkpoints. Phosphorylates proteins on serine, threonine, and tyrosine. Prevents entry into anaphase and mitotic exit after DNA damage via regulation of the Polo kinase CDC5. Seems to be involved in the phosphorylation of RPH1. The chain is Serine/threonine-protein kinase RAD53 (RAD53) from Saccharomyces cerevisiae (strain ATCC 204508 / S288c) (Baker's yeast).